The following is a 122-amino-acid chain: MIQPQTHLNVADNSGARELMCIRIIGASNRRYAHIGDVIVAVIKEAVPNTPLERSEVIRAVIVRTCKELKRNNGMIIRYDDNAAVVIDQEGNPKGTRIFGAIPRELRQLNFTKIVSLAPEVL.

Belongs to the universal ribosomal protein uL14 family. In terms of assembly, part of the 50S ribosomal subunit.

It localises to the plastid. It is found in the chloroplast. Functionally, binds to 23S rRNA. The polypeptide is Large ribosomal subunit protein uL14c (Carica papaya (Papaya)).